The following is a 100-amino-acid chain: Guanine nucleotide exchange factor MSS4 homolog (100 aa).

The MSS4 domain occupies 1-100; that stretch reads MSNLRIVCQH…YLLLCSLEKN (100 aa). The Zn(2+) site is built by cysteine 8, cysteine 11, cysteine 73, and cysteine 76.

This sequence belongs to the DSS4/MSS4 family.

In terms of biological role, guanine-nucleotide-releasing protein that acts on members of the sec4/ypt1/rab subfamily. This chain is Guanine nucleotide exchange factor MSS4 homolog, found in Schizosaccharomyces pombe (strain 972 / ATCC 24843) (Fission yeast).